The following is a 362-amino-acid chain: Histidinol-phosphate aminotransferase (362 aa).

Position 218 is an N6-(pyridoxal phosphate)lysine (Lys218).

This sequence belongs to the class-II pyridoxal-phosphate-dependent aminotransferase family. Histidinol-phosphate aminotransferase subfamily. As to quaternary structure, homodimer. The cofactor is pyridoxal 5'-phosphate.

It catalyses the reaction L-histidinol phosphate + 2-oxoglutarate = 3-(imidazol-4-yl)-2-oxopropyl phosphate + L-glutamate. It functions in the pathway amino-acid biosynthesis; L-histidine biosynthesis; L-histidine from 5-phospho-alpha-D-ribose 1-diphosphate: step 7/9. This chain is Histidinol-phosphate aminotransferase, found in Xanthomonas campestris pv. campestris (strain 8004).